A 126-amino-acid polypeptide reads, in one-letter code: Histone H2B type 1-D (126 aa).

A compositionally biased stretch (low complexity) spans 1 to 12 (MPEPTKSAPAPK). The segment at 1-36 (MPEPTKSAPAPKKGSKKAVTKAQKKDGKKRKRSRKE) is disordered. The residue at position 2 (P2) is an N-acetylproline. At E3 the chain carries ADP-ribosyl glutamic acid. N6-(2-hydroxyisobutyryl)lysine; alternate is present on K6. An N6-(beta-hydroxybutyryl)lysine; alternate modification is found at K6. Position 6 is an N6-acetyllysine; alternate (K6). An N6-butyryllysine; alternate modification is found at K6. Residue K6 is modified to N6-crotonyllysine; alternate. K6 carries the post-translational modification N6-lactoyllysine; alternate. K6 participates in a covalent cross-link: Glycyl lysine isopeptide (Lys-Gly) (interchain with G-Cter in SUMO2); alternate. Position 7 is an ADP-ribosylserine (S7). K12 is modified (N6-(beta-hydroxybutyryl)lysine; alternate). 2 positions are modified to N6-acetyllysine; alternate: K12 and K13. N6-crotonyllysine; alternate occurs at positions 12 and 13. K12 bears the N6-lactoyllysine; alternate mark. Position 13 is an N6-(2-hydroxyisobutyryl)lysine; alternate (K13). At S15 the chain carries Phosphoserine; by STK4/MST1. N6-acetyllysine; alternate occurs at positions 16, 17, 21, and 24. An N6-crotonyllysine; alternate mark is found at K16, K17, K21, and K24. N6-lactoyllysine; alternate is present on residues K16, K17, K21, and K24. N6-(beta-hydroxybutyryl)lysine; alternate occurs at positions 17 and 21. At K17 the chain carries N6-glutaryllysine; alternate. N6-(2-hydroxyisobutyryl)lysine; alternate is present on residues K21 and K24. K21 is modified (N6-butyryllysine; alternate). A Glycyl lysine isopeptide (Lys-Gly) (interchain with G-Cter in SUMO2); alternate cross-link involves residue K21. At K25 the chain carries N6-(2-hydroxyisobutyryl)lysine. At K35 the chain carries N6-(2-hydroxyisobutyryl)lysine; alternate. At K35 the chain carries N6-(beta-hydroxybutyryl)lysine; alternate. Position 35 is an N6-crotonyllysine; alternate (K35). K35 carries the N6-glutaryllysine; alternate modification. Residue K35 is modified to N6-succinyllysine; alternate. K35 is covalently cross-linked (Glycyl lysine isopeptide (Lys-Gly) (interchain with G-Cter in ubiquitin); alternate). The residue at position 36 (E36) is a PolyADP-ribosyl glutamic acid. S37 carries the post-translational modification Phosphoserine; by AMPK. N6-(2-hydroxyisobutyryl)lysine; alternate is present on residues K44, K47, and K58. An N6-lactoyllysine; alternate modification is found at K44. K44 and K47 each carry N6-glutaryllysine; alternate. An N6-methyllysine; alternate modification is found at K47. The residue at position 58 (K58) is an N6,N6-dimethyllysine; alternate. Residue R80 is modified to Dimethylated arginine. Position 86 is an N6-(2-hydroxyisobutyryl)lysine; alternate (K86). K86 bears the N6-(beta-hydroxybutyryl)lysine; alternate mark. K86 carries the N6-acetyllysine; alternate modification. N6-lactoyllysine; alternate is present on K86. K86 carries the N6,N6,N6-trimethyllysine; alternate modification. R87 and R93 each carry omega-N-methylarginine. K109 is subject to N6-(2-hydroxyisobutyryl)lysine; alternate. K109 carries the N6-lactoyllysine; alternate modification. At K109 the chain carries N6-glutaryllysine; alternate. K109 carries the N6-methyllysine; alternate modification. S113 carries an O-linked (GlcNAc) serine glycan. Position 116 is a phosphothreonine (T116). 2 positions are modified to N6-(2-hydroxyisobutyryl)lysine; alternate: K117 and K121. N6-(beta-hydroxybutyryl)lysine; alternate occurs at positions 117 and 121. 2 positions are modified to N6-lactoyllysine; alternate: K117 and K121. K117 and K121 each carry N6-glutaryllysine; alternate. N6-succinyllysine; alternate is present on residues K117 and K121. The residue at position 117 (K117) is an N6-malonyllysine; alternate. N6-methylated lysine; alternate is present on K117. K121 participates in a covalent cross-link: Glycyl lysine isopeptide (Lys-Gly) (interchain with G-Cter in ubiquitin); alternate.

This sequence belongs to the histone H2B family. In terms of assembly, the nucleosome is a histone octamer containing two molecules each of H2A, H2B, H3 and H4 assembled in one H3-H4 heterotetramer and two H2A-H2B heterodimers. The octamer wraps approximately 147 bp of DNA. Post-translationally, monoubiquitination at Lys-35 (H2BK34Ub) by the MSL1/MSL2 dimer is required for histone H3 'Lys-4' (H3K4me) and 'Lys-79' (H3K79me) methylation and transcription activation at specific gene loci, such as HOXA9 and MEIS1 loci. Similarly, monoubiquitination at Lys-121 (H2BK120Ub) by the RNF20/40 complex gives a specific tag for epigenetic transcriptional activation and is also prerequisite for histone H3 'Lys-4' and 'Lys-79' methylation. It also functions cooperatively with the FACT dimer to stimulate elongation by RNA polymerase II. H2BK120Ub also acts as a regulator of mRNA splicing: deubiquitination by USP49 is required for efficient cotranscriptional splicing of a large set of exons. Phosphorylation at Ser-37 (H2BS36ph) by AMPK in response to stress promotes transcription. Phosphorylated on Ser-15 (H2BS14ph) by STK4/MST1 during apoptosis; which facilitates apoptotic chromatin condensation. Also phosphorylated on Ser-15 in response to DNA double strand breaks (DSBs), and in correlation with somatic hypermutation and immunoglobulin class-switch recombination. In terms of processing, glcNAcylation at Ser-113 promotes monoubiquitination of Lys-121. It fluctuates in response to extracellular glucose, and associates with transcribed genes. Post-translationally, ADP-ribosylated by PARP1 or PARP2 on Ser-7 (H2BS6ADPr) in response to DNA damage. H2BS6ADPr promotes recruitment of CHD1L. Mono-ADP-ribosylated on Glu-3 (H2BE2ADPr) by PARP3 in response to single-strand breaks. Poly ADP-ribosylation on Glu-36 (H2BE35ADPr) by PARP1 regulates adipogenesis: it inhibits phosphorylation at Ser-37 (H2BS36ph), thereby blocking expression of pro-adipogenetic genes. Crotonylation (Kcr) is specifically present in male germ cells and marks testis-specific genes in post-meiotic cells, including X-linked genes that escape sex chromosome inactivation in haploid cells. Crotonylation marks active promoters and enhancers and confers resistance to transcriptional repressors. It is also associated with post-meiotically activated genes on autosomes. In terms of processing, lactylated in macrophages by EP300/P300 by using lactoyl-CoA directly derived from endogenous or exogenous lactate, leading to stimulates gene transcription.

It is found in the nucleus. Its subcellular location is the chromosome. Core component of nucleosome. Nucleosomes wrap and compact DNA into chromatin, limiting DNA accessibility to the cellular machineries which require DNA as a template. Histones thereby play a central role in transcription regulation, DNA repair, DNA replication and chromosomal stability. DNA accessibility is regulated via a complex set of post-translational modifications of histones, also called histone code, and nucleosome remodeling. This Homo sapiens (Human) protein is Histone H2B type 1-D.